The following is a 249-amino-acid chain: Transcription initiation factor TFIID subunit 9B (249 aa).

Residue Met-1 is modified to N-acetylmethionine. A Phosphoserine modification is found at Ser-147. The disordered stretch occupies residues 148–171; the sequence is AVSSRPTTPPVAPPQAVSGPNKAA. Phosphothreonine is present on Thr-172. Position 175 is a phosphoserine (Ser-175). The segment covering 224–234 has biased composition (polar residues); sequence VSSQNTATDSN. The interval 224–249 is disordered; sequence VSSQNTATDSNPLKRKHDDDDDNDTM.

The protein belongs to the TAF9 family. As to quaternary structure, binds TAF5 and TAF6. Component of TFIID and the TATA-binding protein-free TAF complex (TFTC). TFIID is composed of TATA binding protein (TBP) and a number of TBP-associated factors (TAFs). Binds N-terminal domain of p53/TP53 which is essential for transcription.

Its subcellular location is the nucleus. Essential for cell viability. TAF9 and TAF9B are involved in transcriptional activation as well as repression of distinct but overlapping sets of genes. May have a role in gene regulation associated with apoptosis. TAFs are components of the transcription factor IID (TFIID) complex, the TBP-free TAFII complex (TFTC), the PCAF histone acetylase complex and the STAGA transcription coactivator-HAT complex. TFIID or TFTC are essential for the regulation of RNA polymerase II-mediated transcription. This chain is Transcription initiation factor TFIID subunit 9B (Taf9b), found in Mus musculus (Mouse).